Here is a 664-residue protein sequence, read N- to C-terminus: MEPLYQYAWLIPVLPLLGAMVIGIGLISLNKFTNKLRQLNAVFVLSLIGTSMALSFGLLWSQIQGHEAFTYTLEWAAAGDFHLQMGYTVDHLSALMSVIVTTVALLVMIYTDGYMAHDPGYVRFYAYLSIFSSSMLGLVFSPNLVQVYIFWELVGMCSYLLIGFWYDRKAAADACQKAFVTNRVGDFGLLLGMLGLYWATGSFEFDLMGDRLMDLVSTGQISSLLAIVFAVLVFLGPVAKSAQFPLHVWLPDAMEGPTPISALIHAATMVAAGVFLVARMYPVFEPIPEAMNVIAWTGATTAFLGATIALTQNDIKKGLAYSTMSQLGYMVMAMGIGGYTAGLFHLMTHAYFKAMLFLGSGSVIHGMEEVVGHNAVLAQDMRLMGGLRKYMPITATTFLIGTLAICGIPPFAGFWSKDEILGLAFEANPVLWFIGWATAGMTAFYMFRMYFLTFEGEFRGTDQQLQEKLLTAAGQAPEEGHHGSKPHESPLTMTFPLMALAVPSVLIGLLGVPWGNRFEAFVFSPNEAAEAAEHGFELTEFLIMGGNSVGIALIGITIASLMYLQQRIDPARLAEKFPVLYQLSLNKWYFDDIYNNVFVMGTRRLARQILEVDYRVVDGAVNLTGIATLLSGEGLKYIENGRVQFYALIVFGAVLGFVIFFSVA.

Transmembrane regions (helical) follow at residues 7 to 27, 39 to 59, 91 to 111, 120 to 140, 144 to 164, 187 to 207, 219 to 239, 258 to 278, 290 to 310, 327 to 347, 352 to 372, 395 to 415, 420 to 440, 495 to 515, 541 to 561, and 643 to 663; these read YAWL…IGLI, LNAV…FGLL, HLSA…MIYT, GYVR…GLVF, LVQV…LIGF, FGLL…EFDL, GQIS…GPVA, TPIS…FLVA, AMNV…TIAL, LGYM…FHLM, FKAM…EVVG, ATTF…AGFW, ILGL…ATAG, FPLM…VPWG, FLIM…IASL, and VQFY…FFSV.

The protein belongs to the complex I subunit 5 family.

The protein localises to the cell membrane. The catalysed reaction is a plastoquinone + NADH + (n+1) H(+)(in) = a plastoquinol + NAD(+) + n H(+)(out). It catalyses the reaction a plastoquinone + NADPH + (n+1) H(+)(in) = a plastoquinol + NADP(+) + n H(+)(out). NDH-1 shuttles electrons from NAD(P)H, via FMN and iron-sulfur (Fe-S) centers, to quinones in the respiratory chain. The immediate electron acceptor for the enzyme in this species is believed to be plastoquinone. Couples the redox reaction to proton translocation (for every two electrons transferred, four hydrogen ions are translocated across the cytoplasmic membrane), and thus conserves the redox energy in a proton gradient. In Picosynechococcus sp. (strain ATCC 27264 / PCC 7002 / PR-6) (Agmenellum quadruplicatum), this protein is NAD(P)H-quinone oxidoreductase chain 5 (ndhF).